The sequence spans 280 residues: Phosphatidylglycerol--prolipoprotein diacylglyceryl transferase (280 aa).

Helical transmembrane passes span 30–50, 71–91, 106–126, and 132–152; these read WYGLAYVVGILLGWFYARRIV, FLLWAAGGIVLGGRIGYILFY, IWNGGMSFHGGLVGTTLAMII, and AIPIWSLFDVVAAVVPIGLFF. R154 serves as a coordination point for a 1,2-diacyl-sn-glycero-3-phospho-(1'-sn-glycerol). 3 consecutive transmembrane segments (helical) span residues 188-208, 217-237, and 251-271; these read QLYEAALEGLVLLAVLAWFVY, GLVTGIFVCGYAASRIFVEFF, and WLTMGMVLSVPMALIGIWAIA.

Belongs to the Lgt family.

The protein localises to the cell inner membrane. It catalyses the reaction L-cysteinyl-[prolipoprotein] + a 1,2-diacyl-sn-glycero-3-phospho-(1'-sn-glycerol) = an S-1,2-diacyl-sn-glyceryl-L-cysteinyl-[prolipoprotein] + sn-glycerol 1-phosphate + H(+). It participates in protein modification; lipoprotein biosynthesis (diacylglyceryl transfer). Its function is as follows. Catalyzes the transfer of the diacylglyceryl group from phosphatidylglycerol to the sulfhydryl group of the N-terminal cysteine of a prolipoprotein, the first step in the formation of mature lipoproteins. In Sinorhizobium medicae (strain WSM419) (Ensifer medicae), this protein is Phosphatidylglycerol--prolipoprotein diacylglyceryl transferase.